A 322-amino-acid polypeptide reads, in one-letter code: Beta-ketoacyl-[acyl-carrier-protein] synthase III (322 aa).

Residues Cys-113 and His-247 contribute to the active site. The segment at 248–252 is ACP-binding; it reads QANIR. Asn-278 is an active-site residue.

It belongs to the thiolase-like superfamily. FabH family. As to quaternary structure, homodimer.

It is found in the cytoplasm. The catalysed reaction is malonyl-[ACP] + acetyl-CoA + H(+) = 3-oxobutanoyl-[ACP] + CO2 + CoA. It participates in lipid metabolism; fatty acid biosynthesis. Its function is as follows. Catalyzes the condensation reaction of fatty acid synthesis by the addition to an acyl acceptor of two carbons from malonyl-ACP. Catalyzes the first condensation reaction which initiates fatty acid synthesis and may therefore play a role in governing the total rate of fatty acid production. Possesses both acetoacetyl-ACP synthase and acetyl transacylase activities. Its substrate specificity determines the biosynthesis of branched-chain and/or straight-chain of fatty acids. This chain is Beta-ketoacyl-[acyl-carrier-protein] synthase III, found in Tropheryma whipplei (strain TW08/27) (Whipple's bacillus).